A 113-amino-acid chain; its full sequence is MDGMIAMLPAPLQQLSSHIDFQGQKVAERTYQVILTLAGIIGFFVGYSTQQLSYAMYTVMGAAVFTALIILPPWPFLFRKNPIVWQTPIEEQEASSSSDNEKKDKKKETKKTK.

Residues 1-32 (MDGMIAMLPAPLQQLSSHIDFQGQKVAERTYQ) are Cytoplasmic-facing. A helical membrane pass occupies residues 33–53 (VILTLAGIIGFFVGYSTQQLS). The Lumenal portion of the chain corresponds to 54-57 (YAMY). Residues 58-78 (TVMGAAVFTALIILPPWPFLF) traverse the membrane as a helical segment. Over 79-113 (RKNPIVWQTPIEEQEASSSSDNEKKDKKKETKKTK) the chain is Cytoplasmic. The disordered stretch occupies residues 89–113 (IEEQEASSSSDNEKKDKKKETKKTK).

It belongs to the SPCS1 family. As to quaternary structure, component of the signal peptidase complex (SPC) composed of a catalytic subunit sec-11 and three accessory subunits spcs-1, spcs-2 and spcs-3. The complex induces a local thinning of the ER membrane which is used to measure the length of the signal peptide (SP) h-region of protein substrates. This ensures the selectivity of the complex towards h-regions shorter than 18-20 amino acids.

The protein localises to the endoplasmic reticulum membrane. In terms of biological role, component of the signal peptidase complex (SPC) which catalyzes the cleavage of N-terminal signal sequences from nascent proteins as they are translocated into the lumen of the endoplasmic reticulum. Dispensable for SPC enzymatic activity. This chain is Signal peptidase complex subunit 1, found in Caenorhabditis briggsae.